Consider the following 550-residue polypeptide: DNA mismatch repair protein MutL (550 aa).

Belongs to the DNA mismatch repair MutL/HexB family.

This protein is involved in the repair of mismatches in DNA. It is required for dam-dependent methyl-directed DNA mismatch repair. May act as a 'molecular matchmaker', a protein that promotes the formation of a stable complex between two or more DNA-binding proteins in an ATP-dependent manner without itself being part of a final effector complex. This is DNA mismatch repair protein MutL from Microcystis aeruginosa (strain NIES-843 / IAM M-2473).